Consider the following 132-residue polypeptide: Small ribosomal subunit protein uS11 (132 aa).

Belongs to the universal ribosomal protein uS11 family. As to quaternary structure, part of the 30S ribosomal subunit. Interacts with proteins S7 and S18. Binds to IF-3.

Located on the platform of the 30S subunit, it bridges several disparate RNA helices of the 16S rRNA. Forms part of the Shine-Dalgarno cleft in the 70S ribosome. The chain is Small ribosomal subunit protein uS11 from Oenococcus oeni (strain ATCC BAA-331 / PSU-1).